Consider the following 239-residue polypeptide: Large ribosomal subunit protein uL2 (239 aa).

Residues 200 to 239 are disordered; the sequence is VNHPHGGKEHHIGRPSTVSRRAPPGRKVGHIAARRTGRRK. The span at 222–239 shows a compositional bias: basic residues; it reads PPGRKVGHIAARRTGRRK.

This sequence belongs to the universal ribosomal protein uL2 family. Part of the 50S ribosomal subunit. Forms a bridge to the 30S subunit in the 70S ribosome.

Functionally, one of the primary rRNA binding proteins. Required for association of the 30S and 50S subunits to form the 70S ribosome, for tRNA binding and peptide bond formation. It has been suggested to have peptidyltransferase activity; this is somewhat controversial. Makes several contacts with the 16S rRNA in the 70S ribosome. The chain is Large ribosomal subunit protein uL2 from Thermococcus kodakarensis (strain ATCC BAA-918 / JCM 12380 / KOD1) (Pyrococcus kodakaraensis (strain KOD1)).